Consider the following 371-residue polypeptide: Transcriptional regulator of yeast form adherence 2 (371 aa).

The C3H1-type 1 zinc-finger motif lies at 16–44 (RNPAVLCSFYSKIGACRHGEKCSKKHLKP). Residues 94–107 (TVSQIDDSPHSNSG) are compositionally biased toward polar residues. Residues 94 to 194 (TVSQIDDSPH…NIEDAKLEDT (101 aa)) are disordered. Positions 115 to 124 (VETQEVETEN) are enriched in acidic residues. Positions 132-194 (GDVKIDHNED…NIEDAKLEDT (63 aa)) are enriched in basic and acidic residues. The RRM domain maps to 192-279 (EDTEKDKLPE…KPVYSDLSPV (88 aa)). Residues 281 to 309 (DFNDACCEEYRDYHDCQRGAMCNYMHVRL) form a C3H1-type 2 zinc finger. The tract at residues 337 to 371 (ELPGDIRSSSSTNDDETNGNENGISSTMAVLEQLS) is disordered. Positions 355-371 (GNENGISSTMAVLEQLS) are enriched in polar residues.

The protein localises to the nucleus. Its function is as follows. Transcription factor required for yeast cell adherence to silicone substrate. The protein is Transcriptional regulator of yeast form adherence 2 (TRY2) of Candida albicans (strain SC5314 / ATCC MYA-2876) (Yeast).